Consider the following 64-residue polypeptide: Large ribosomal subunit protein bL35 (64 aa).

2 stretches are compositionally biased toward basic residues: residues 1–15 and 23–42; these read MPKAKTHSGASKRFR and VRQKANRRHLLEHKPTKRTR. The interval 1-45 is disordered; sequence MPKAKTHSGASKRFRTTGSGKVVRQKANRRHLLEHKPTKRTRRLD.

Belongs to the bacterial ribosomal protein bL35 family.

In Mycolicibacterium vanbaalenii (strain DSM 7251 / JCM 13017 / BCRC 16820 / KCTC 9966 / NRRL B-24157 / PYR-1) (Mycobacterium vanbaalenii), this protein is Large ribosomal subunit protein bL35.